The following is a 491-amino-acid chain: UDP-N-acetylmuramoyl-L-alanyl-D-glutamate--2,6-diaminopimelate ligase (491 aa).

Ser-30 contacts UDP-N-acetyl-alpha-D-muramoyl-L-alanyl-D-glutamate. 108–114 (GTNGKTT) is an ATP binding site. UDP-N-acetyl-alpha-D-muramoyl-L-alanyl-D-glutamate contacts are provided by residues Asn-149, 150–151 (TT), Ser-177, Gln-183, and Arg-185. Lys-217 bears the N6-carboxylysine mark. Residues Arg-383, 407–410 (DNPR), Gly-458, and Glu-462 contribute to the meso-2,6-diaminopimelate site. Residues 407 to 410 (DNPR) carry the Meso-diaminopimelate recognition motif motif.

It belongs to the MurCDEF family. MurE subfamily. Mg(2+) is required as a cofactor. Post-translationally, carboxylation is probably crucial for Mg(2+) binding and, consequently, for the gamma-phosphate positioning of ATP.

The protein localises to the cytoplasm. The enzyme catalyses UDP-N-acetyl-alpha-D-muramoyl-L-alanyl-D-glutamate + meso-2,6-diaminopimelate + ATP = UDP-N-acetyl-alpha-D-muramoyl-L-alanyl-gamma-D-glutamyl-meso-2,6-diaminopimelate + ADP + phosphate + H(+). It participates in cell wall biogenesis; peptidoglycan biosynthesis. In terms of biological role, catalyzes the addition of meso-diaminopimelic acid to the nucleotide precursor UDP-N-acetylmuramoyl-L-alanyl-D-glutamate (UMAG) in the biosynthesis of bacterial cell-wall peptidoglycan. This chain is UDP-N-acetylmuramoyl-L-alanyl-D-glutamate--2,6-diaminopimelate ligase, found in Listeria innocua serovar 6a (strain ATCC BAA-680 / CLIP 11262).